Here is a 431-residue protein sequence, read N- to C-terminus: Ribosomal RNA small subunit methyltransferase B (431 aa).

S-adenosyl-L-methionine is bound by residues C254–K260, D277, D303, and D322. C375 (nucleophile) is an active-site residue. The disordered stretch occupies residues L398–E417. Positions T403–L412 are enriched in polar residues.

The protein belongs to the class I-like SAM-binding methyltransferase superfamily. RsmB/NOP family.

Its subcellular location is the cytoplasm. It carries out the reaction cytidine(967) in 16S rRNA + S-adenosyl-L-methionine = 5-methylcytidine(967) in 16S rRNA + S-adenosyl-L-homocysteine + H(+). Functionally, specifically methylates the cytosine at position 967 (m5C967) of 16S rRNA. The chain is Ribosomal RNA small subunit methyltransferase B from Klebsiella pneumoniae (strain 342).